Consider the following 122-residue polypeptide: Large ribosomal subunit protein eL8 (122 aa).

This sequence belongs to the eukaryotic ribosomal protein eL8 family. In terms of assembly, part of the 50S ribosomal subunit. Probably part of the RNase P complex.

The protein localises to the cytoplasm. In terms of biological role, multifunctional RNA-binding protein that recognizes the K-turn motif in ribosomal RNA, the RNA component of RNase P, box H/ACA, box C/D and box C'/D' sRNAs. This Methanothrix thermoacetophila (strain DSM 6194 / JCM 14653 / NBRC 101360 / PT) (Methanosaeta thermophila) protein is Large ribosomal subunit protein eL8.